Consider the following 127-residue polypeptide: Aspartate 1-decarboxylase (127 aa).

S25 serves as the catalytic Schiff-base intermediate with substrate; via pyruvic acid. Residue S25 is modified to Pyruvic acid (Ser). Residue T57 coordinates substrate. The Proton donor role is filled by Y58. Substrate is bound at residue 73 to 75 (GAA).

The protein belongs to the PanD family. In terms of assembly, heterooctamer of four alpha and four beta subunits. Pyruvate is required as a cofactor. In terms of processing, is synthesized initially as an inactive proenzyme, which is activated by self-cleavage at a specific serine bond to produce a beta-subunit with a hydroxyl group at its C-terminus and an alpha-subunit with a pyruvoyl group at its N-terminus.

The protein resides in the cytoplasm. It catalyses the reaction L-aspartate + H(+) = beta-alanine + CO2. The protein operates within cofactor biosynthesis; (R)-pantothenate biosynthesis; beta-alanine from L-aspartate: step 1/1. Catalyzes the pyruvoyl-dependent decarboxylation of aspartate to produce beta-alanine. This is Aspartate 1-decarboxylase from Vesicomyosocius okutanii subsp. Calyptogena okutanii (strain HA).